A 675-amino-acid chain; its full sequence is INO80 complex subunit D (675 aa).

Disordered regions lie at residues 1 to 39 (MNNNSNNNNNNNIDQKNETTNEITNNTSNNNNIINNVNQ), 183 to 203 (TGNNNNNTTTTTTTTTTNSTP), 274 to 324 (LKQK…ERQV), 473 to 523 (DSNK…KLNK), and 627 to 675 (VPVT…TMIS). Composition is skewed to low complexity over residues 282–318 (QQLQNQKMFEQSQQQDQQQKPVQQPIQQQQQQDQLQI), 482–519 (NNDNNINNNNNNNNNNNNNNNNNNNNNNNNNNNNNNNN), and 634–648 (NQNNQNNNNNNTNNS). The span at 664-675 (EILKDSDNTMIS) shows a compositional bias: basic and acidic residues.

This sequence belongs to the INO80D family. Component of the chromatin-remodeling INO80 complex.

The protein localises to the nucleus. Its function is as follows. Putative regulatory component of the chromatin remodeling INO80 complex which is involved in transcriptional regulation, DNA replication and probably DNA repair. The sequence is that of INO80 complex subunit D from Dictyostelium discoideum (Social amoeba).